Consider the following 515-residue polypeptide: SWI/SNF-related matrix-associated actin-dependent regulator of chromatin subfamily D member 1 (515 aa).

Positions 1–128 are disordered; it reads MAARAGFQSV…RNHNAKKKKM (128 aa). Positions 14-23 are enriched in gly residues; it reads GGAGASGGAG. The segment at 43-167 is interaction with ESR1, NR1H4, NR3C1, PGR and SMARCA4; sequence APGQGLYRSP…DQTIMRKRLD (125 aa). Arg-68 and Arg-88 each carry asymmetric dimethylarginine. Residue Lys-101 forms a Glycyl lysine isopeptide (Lys-Gly) (interchain with G-Cter in SUMO2) linkage. The segment covering 103 to 117 has biased composition (low complexity); it reads PAPQQIKQVQQQAVQ. The tract at residues 168-474 is interaction with SMARCC1 and SMARCC2; sequence IQEALKRPIK…VMTDVVGNSE (307 aa). Residues 180–515 form a necessary for GR/NR3C1-mediated remodeling and transcription from chromatin; required for GR/NR3C1 interaction with the BRG1/SMARCA4 complex in vivo region; it reads RKLRIFISNT…LEQALGIRNT (336 aa). Residue Thr-203 is modified to Phosphothreonine. Lys-223 carries the N6-acetyllysine modification. The SWIB/MDM2 domain maps to 290 to 367; it reads YQPPQFKLDP…PQRLHALLMP (78 aa). A coiled-coil region spans residues 412–440; it reads ASQQEIATLDNKIHETIETINQLKTQREF.

This sequence belongs to the SMARCD family. Component of the multiprotein chromatin-remodeling complexes SWI/SNF: SWI/SNF-A (BAF), SWI/SNF-B (PBAF) and related complexes. The canonical complex contains a catalytic subunit (either SMARCA4/BRG1/BAF190A or SMARCA2/BRM/BAF190B), and at least SMARCE1, ACTL6A/BAF53, SMARCC1/BAF155, SMARCC2/BAF170, and SMARCB1/SNF5/BAF47. Other subunits specific to each of the complexes may also be present permitting several possible combinations developmentally and tissue specific. Component of the BAF complex, which includes at least actin (ACTB), ARID1A/BAF250A, ARID1B/BAF250B, SMARCA2/BRM, SMARCA4/BRG1/BAF190A, ACTL6A/BAF53, ACTL6B/BAF53B, SMARCE1/BAF57, SMARCC1/BAF155, SMARCC2/BAF170, SMARCB1/SNF5/INI1, and one or more SMARCD1/BAF60A, SMARCD2/BAF60B, or SMARCD3/BAF60C. In muscle cells, the BAF complex also contains DPF3. Component of neural progenitors-specific chromatin remodeling complex (npBAF complex) composed of at least, ARID1A/BAF250A or ARID1B/BAF250B, SMARCD1/BAF60A, SMARCD3/BAF60C, SMARCA2/BRM/BAF190B, SMARCA4/BRG1/BAF190A, SMARCB1/BAF47, SMARCC1/BAF155, SMARCE1/BAF57, SMARCC2/BAF170, PHF10/BAF45A, ACTL6A/BAF53A and actin. Component of neuron-specific chromatin remodeling complex (nBAF complex) composed of at least, ARID1A/BAF250A or ARID1B/BAF250B, SMARCD1/BAF60A, SMARCD3/BAF60C, SMARCA2/BRM/BAF190B, SMARCA4/BRG1/BAF190A, SMARCB1/BAF47, SMARCC1/BAF155, SMARCE1/BAF57, SMARCC2/BAF170, DPF1/BAF45B, DPF3/BAF45C, ACTL6B/BAF53B and actin. Component of the SWI/SNF-B (PBAF) chromatin remodeling complex, at least composed of SMARCA4/BRG1, SMARCB1/BAF47/SNF5, ACTL6A/BAF53A or ACTL6B/BAF53B, SMARCE1/BAF57, SMARCD1/BAF60A, SMARCD2/BAF60B, perhaps SMARCD3/BAF60C, SMARCC1/BAF155, SMARCC2/BAF170, PBRM1/BAF180, ARID2/BAF200 and actin (ACTB). Component of SWI/SNF (GBAF) subcomplex, which includes at least BICRA or BICRAL (mutually exclusive), BRD9, SS18, SMARCA2/BRM, SMARCA4/BRG1/BAF190A, ACTL6A/BAF53, SMARCC1/BAF155, and SMARCD1/BAF60A. Specifically interacts with the VDR heterodimer complex. Interacts with ESR1, NR3C1, NR1H4, PGR, SMARCA4, SMARCC1 and SMARCC2. Interacts with DPF2. Interacts with FOS, FOSB, FOSL1 and FOSL2.

The protein resides in the nucleus. In terms of biological role, involved in transcriptional activation and repression of select genes by chromatin remodeling (alteration of DNA-nucleosome topology). Component of SWI/SNF chromatin remodeling complexes that carry out key enzymatic activities, changing chromatin structure by altering DNA-histone contacts within a nucleosome in an ATP-dependent manner. Belongs to the neural progenitors-specific chromatin remodeling complex (npBAF complex) and the neuron-specific chromatin remodeling complex (nBAF complex). During neural development a switch from a stem/progenitor to a postmitotic chromatin remodeling mechanism occurs as neurons exit the cell cycle and become committed to their adult state. The transition from proliferating neural stem/progenitor cells to postmitotic neurons requires a switch in subunit composition of the npBAF and nBAF complexes. As neural progenitors exit mitosis and differentiate into neurons, npBAF complexes which contain ACTL6A/BAF53A and PHF10/BAF45A, are exchanged for homologous alternative ACTL6B/BAF53B and DPF1/BAF45B or DPF3/BAF45C subunits in neuron-specific complexes (nBAF). The npBAF complex is essential for the self-renewal/proliferative capacity of the multipotent neural stem cells. The nBAF complex along with CREST plays a role regulating the activity of genes essential for dendrite growth. Has a strong influence on vitamin D-mediated transcriptional activity from an enhancer vitamin D receptor element (VDRE). May be a link between mammalian SWI-SNF-like chromatin remodeling complexes and the vitamin D receptor (VDR) heterodimer. Mediates critical interactions between nuclear receptors and the BRG1/SMARCA4 chromatin-remodeling complex for transactivation. Interacts with AKIRIN2. The polypeptide is SWI/SNF-related matrix-associated actin-dependent regulator of chromatin subfamily D member 1 (SMARCD1) (Bos taurus (Bovine)).